Reading from the N-terminus, the 262-residue chain is Acyl-[acyl-carrier-protein]--UDP-N-acetylglucosamine O-acyltransferase (262 aa).

The protein belongs to the transferase hexapeptide repeat family. LpxA subfamily. In terms of assembly, homotrimer.

It is found in the cytoplasm. It carries out the reaction a (3R)-hydroxyacyl-[ACP] + UDP-N-acetyl-alpha-D-glucosamine = a UDP-3-O-[(3R)-3-hydroxyacyl]-N-acetyl-alpha-D-glucosamine + holo-[ACP]. It participates in glycolipid biosynthesis; lipid IV(A) biosynthesis; lipid IV(A) from (3R)-3-hydroxytetradecanoyl-[acyl-carrier-protein] and UDP-N-acetyl-alpha-D-glucosamine: step 1/6. Its function is as follows. Involved in the biosynthesis of lipid A, a phosphorylated glycolipid that anchors the lipopolysaccharide to the outer membrane of the cell. The protein is Acyl-[acyl-carrier-protein]--UDP-N-acetylglucosamine O-acyltransferase of Pectobacterium atrosepticum (strain SCRI 1043 / ATCC BAA-672) (Erwinia carotovora subsp. atroseptica).